We begin with the raw amino-acid sequence, 861 residues long: Methyltransferase/ribosomally synthesized type III borosin cyclic peptide precursor aboMAa (861 aa).

A methyltransferase domain region spans residues 1 to 279; sequence MSSPAVETKV…AISTFYLPPK (279 aa). Active-site residues include Arg100, Tyr104, and Tyr126. The S-adenosyl-L-methionine site is built by Tyr126, His128, Val131, Ala158, Gln200, Ala241, Ser272, and Thr273. A clasp domain region spans residues 280 to 408; sequence ALSPLHEESA…GLVRSVMKTS (129 aa). Residues 409–799 form a type III-specific C-terminal domain region; that stretch reads PEDVAKQFVQ…PPDLEELPIP (391 aa). 2 disordered regions span residues 575–596 and 772–801; these read NGAF…SSQG and EAAE…IPDA. The segment covering 579 to 593 has biased composition (gly residues); that stretch reads PSGGGGGSGGGGGSS. Basic and acidic residues predominate over residues 772–783; it reads EAAEKDSAVDDE. A compositionally biased stretch (acidic residues) spans 784-797; the sequence is KFADEEPPDLEELP. An N-methylvaline mark is found at Val805 and Val807. Tandem repeats lie at residues 805 to 809, 810 to 814, 815 to 819, 820 to 824, 825 to 829, 830 to 834, 835 to 839, 840 to 844, and 845 to 849. A 10 X 5 AA tandem repeats of VDVTD region spans residues 805–854; that stretch reads VDVTDVDVTDVDVTDVDVTDVDVTDVDVTDVDVTDVDVTDVDVTDVDVVD. At Thr808 the chain carries N-methylthreonine. 2 positions are modified to N-methylvaline: Val810 and Val812. At Thr813 the chain carries N-methylthreonine. Val815 and Val817 each carry N-methylvaline. The residue at position 818 (Thr818) is an N-methylthreonine. 2 positions are modified to N-methylvaline: Val820 and Val822. Thr823 is modified (N-methylthreonine). N-methylvaline is present on residues Val825 and Val827. An N-methylthreonine modification is found at Thr828. Residues Val830 and Val832 each carry the N-methylvaline modification. At Thr833 the chain carries N-methylthreonine. The 10; approximate repeat unit spans residues 850 to 854; it reads VDVVD.

In the N-terminal section; belongs to the precorrin methyltransferase family. AboMA automethylates at Val-805, Val-807, Thr-808, Val-810, Val-812, Thr-813, Val-815, Val-817, Thr-818, Val-820, Val-822, Thr-823, Val-825, Val-827 and Thr-828, Val-830, Val-832 and T-833 before being processed by a prolyloligopeptidase which likely forms a peptidyl ester upon removal of the follower propeptide, which then undergoes macrocyclization with the N-terminus of the modified core peptide. Peptide backbone alpha-N-methylations change the physicochemical properties of amide bonds to provide structural constraints and other favorable characteristics including biological membrane permeability to peptides.

Its pathway is secondary metabolite biosynthesis. Fusion protein of the methyltransferase aboM and a type III borosin core peptide; part of the gene cluster that mediates the biosynthesis of a type III borosin, a highly methylated cyclic peptide with potent biological activities. Type III borosins derive from the C-terminus of the fusion protein, and it is the same protein that methylates its own C-terminus using S-adenosyl methionine (SAM). The C-terminus is subsequently cleaved off and macrocyclized by a prolyloligopeptidase to give the final product. The sequence is that of Methyltransferase/ribosomally synthesized type III borosin cyclic peptide precursor aboMAa from Anomoporia bombycina (Polyporus bombycinus).